A 177-amino-acid polypeptide reads, in one-letter code: NADH-quinone oxidoreductase subunit B (177 aa).

Residues Cys56, Cys57, Cys121, and Cys151 each coordinate [4Fe-4S] cluster.

This sequence belongs to the complex I 20 kDa subunit family. In terms of assembly, NDH-1 is composed of 14 different subunits. Subunits NuoB, C, D, E, F, and G constitute the peripheral sector of the complex. [4Fe-4S] cluster serves as cofactor.

The protein resides in the cell inner membrane. It carries out the reaction a quinone + NADH + 5 H(+)(in) = a quinol + NAD(+) + 4 H(+)(out). Functionally, NDH-1 shuttles electrons from NADH, via FMN and iron-sulfur (Fe-S) centers, to quinones in the respiratory chain. Couples the redox reaction to proton translocation (for every two electrons transferred, four hydrogen ions are translocated across the cytoplasmic membrane), and thus conserves the redox energy in a proton gradient. The protein is NADH-quinone oxidoreductase subunit B of Dinoroseobacter shibae (strain DSM 16493 / NCIMB 14021 / DFL 12).